A 414-amino-acid polypeptide reads, in one-letter code: MSYYDTIFNKHIDKIKSEGRYREFKSLKRQADNFPFAEYEDKQIVMWCINDYLGMSKHVKVMQASIDALLKYGVGSGGTRNIGGNNISILELEKELADLHSKETALVFTSGFVANDTTLASLAKIIPDIVFFSDELNHASIIAGIKSSRAEKYVYRHLDVQHLEKLLQSVDINKPKIIVFESAYSMDGFFSPIKDIINLAKKYNALTFIDEVHTVGLYGKQGGGISELLDCSNQIDIIQGTLAKAYGTIGGYITSNYNLIDAIRLTAPGFIFTTSLPPVISTAATHSIRHLKESNEERIKHQEVVTKLKNSFEHFNIPYLKNESHIIPIIIGDPIKATKVSNMLLNEYGIYVQHINFPTVPRGTERLRIIPTPAHTDKMINDLSTALVHIFDELDIELSSAKELNKEVRLHLIA.

Residues R22, S133, and K152 each coordinate substrate. Positions 185, 213, and 241 each coordinate pyridoxal 5'-phosphate. K244 is an active-site residue. An N6-(pyridoxal phosphate)lysine modification is found at K244. Pyridoxal 5'-phosphate contacts are provided by T273 and T274. Residue T359 coordinates substrate.

Belongs to the class-II pyridoxal-phosphate-dependent aminotransferase family. In terms of assembly, homodimer. Requires pyridoxal 5'-phosphate as cofactor.

The catalysed reaction is succinyl-CoA + glycine + H(+) = 5-aminolevulinate + CO2 + CoA. It participates in porphyrin-containing compound metabolism; protoporphyrin-IX biosynthesis; 5-aminolevulinate from glycine: step 1/1. This Rickettsia prowazekii (strain Madrid E) protein is 5-aminolevulinate synthase (hemA).